A 997-amino-acid chain; its full sequence is Phosphoenolpyruvate carboxylase (997 aa).

Residues 1 to 67 (MKSSGSARTA…KPAARTREDK (67 aa)) are disordered. Active-site residues include H207 and K649.

This sequence belongs to the PEPCase type 1 family. The cofactor is Mg(2+).

It carries out the reaction oxaloacetate + phosphate = phosphoenolpyruvate + hydrogencarbonate. Forms oxaloacetate, a four-carbon dicarboxylic acid source for the tricarboxylic acid cycle. This chain is Phosphoenolpyruvate carboxylase, found in Burkholderia vietnamiensis (strain G4 / LMG 22486) (Burkholderia cepacia (strain R1808)).